The chain runs to 1865 residues: Dedicator of cytokinesis protein 1 (1865 aa).

An SH3 domain is found at 9–70 (REEKYGVAFY…PASYIHLKEA (62 aa)). In terms of domain architecture, C2 DOCK-type spans 425–609 (RNDIYVTLVQ…DSFQISTLVC (185 aa)). The DOCKER domain occupies 1207–1617 (YKEIEREEMY…VEKEYGVRIM (411 aa)). Disordered regions lie at residues 1619–1716 (SSLD…EFKP) and 1732–1865 (TISP…GIVQ). Residues 1639–1666 (PSSSRPLSVASVSSLSSDSTPSRPGSDG) show a composition bias toward low complexity. Positions 1680 to 1694 (RSQDKLDKDDLEKEK) are enriched in basic and acidic residues. Phosphoserine is present on serine 1681. The segment at 1687–1695 (KDDLEKEKK) is phosphoinositide-binding. Positions 1695-1704 (KDKKKEKRNS) are enriched in basic residues. Residues 1705-1716 (KHQEIFEKEFKP) are compositionally biased toward basic and acidic residues. Phosphoserine is present on residues serine 1743, serine 1751, serine 1756, serine 1761, and serine 1764. The segment covering 1756 to 1766 (SVSPSSPSSQQ) has biased composition (low complexity). 2 positions are modified to phosphothreonine: threonine 1767 and threonine 1772. The segment at 1793-1819 (ADVADVPPPLPLKGSVADYGNLMENQD) is interaction with NCK2 second and third SH3 domain (minor). An SH3-binding; interaction with CRK motif is present at residues 1799 to 1805 (PPPLPLK). Residues 1820-1836 (LLGSPTPPPPPPHQRHL) form an interaction with NCK2 third SH3 domain (major) region. The span at 1824–1851 (PTPPPPPPHQRHLPPPLPSKTPPPPPPK) shows a compositional bias: pro residues. The tract at residues 1837–1852 (PPPLPSKTPPPPPPKT) is interaction with NCK2 (minor). The short motif at 1838-1843 (PPLPSK) is the SH3-binding; interaction with CRK element. Positions 1855–1865 (KQASVDSGIVQ) are enriched in polar residues. Residue serine 1858 is modified to Phosphoserine.

This sequence belongs to the DOCK family. As to quaternary structure, interacts with the SH3 domains of CRK and NCK2 via multiple sites. Interacts with nucleotide-free RAC1 via its DOCKER domain. Interacts with ELMO1, ELMO2 and probably ELMO3 via its SH3 domain. Interacts with ADGRB1. Identified in a complex with AUTS2 and ELMO2. Highly expressed in placenta, lung, kidney, pancreas and ovary. Expressed at intermediate level in thymus, testes and colon.

The protein resides in the cytoplasm. It localises to the membrane. Its function is as follows. Involved in cytoskeletal rearrangements required for phagocytosis of apoptotic cells and cell motility. Along with DOCK1, mediates CRK/CRKL regulation of epithelial and endothelial cell spreading and migration on type IV collagen. Functions as a guanine nucleotide exchange factor (GEF), which activates Rac Rho small GTPases by exchanging bound GDP for free GTP. Its GEF activity may be enhanced by ELMO1. In Homo sapiens (Human), this protein is Dedicator of cytokinesis protein 1 (DOCK1).